The following is a 2079-amino-acid chain: Non-reducing polyketide synthase Dhc5 (2079 aa).

Positions 9–246 (LLFGDVTDPW…DELNIHALQH (238 aa)) are N-terminal acylcarrier protein transacylase domain (SAT). The Ketosynthase family 3 (KS3) domain maps to 366-798 (NDGIAIVGMA…GGNACLLLED (433 aa)). Catalysis depends on for beta-ketoacyl synthase activity residues C543, H678, and H717. Positions 895–1199 (VFVFTGQGSH…MTHSLQPKTS (305 aa)) are malonyl-CoA:ACP transacylase (MAT) domain. Catalysis depends on S986, which acts as the For acyl/malonyl transferase activity. The segment at 1268–1414 (EPLISTCAQY…DPTRSQVEWD (147 aa)) is N-terminal hotdog fold. The PKS/mFAS DH domain maps to 1268 to 1584 (EPLISTCAQY…YQELPRATWK (317 aa)). Positions 1304 to 1581 (MDGHKMQGIG…DIRYQELPRA (278 aa)) are product template (PT) domain. Residues 1435 to 1584 (RGHRMQPEVF…YQELPRATWK (150 aa)) form a C-terminal hotdog fold region. The segment at 1613 to 1639 (RELQQPSSATVPAQETTIDEPEQQEGE) is disordered. Positions 1615–1628 (LQQPSSATVPAQET) are enriched in polar residues. Residues 1641–1718 (AAGARLFNAI…DLRKEFRANE (78 aa)) form the Carrier domain. Position 1678 is an O-(pantetheine 4'-phosphoryl)serine (S1678). The tract at residues 1721 to 1784 (VENPRFSATP…EQKRPVKIDD (64 aa)) is disordered. Over residues 1727-1757 (SATPSSAEASIPSSPSSLAHPMSDSASSLSP) the composition is skewed to low complexity. Residues 1758–1784 (SDREEALPLERQSMTKREQKRPVKIDD) are compositionally biased toward basic and acidic residues. The segment at 1812-2057 (ADGTGTIATY…LSVAGDHLDL (246 aa)) is thioesterase (TE) domain. H2064 acts as the For thioesterase activity in catalysis.

It functions in the pathway mycotoxin biosynthesis. Its function is as follows. Highly reducing polyketide synthase; part of the gene cluster that mediates the biosynthesis of 10,11-dehydrocurvularin, a prevalent fungal phytotoxin with heat shock response and immune-modulatory activities. The highly reducing polyketide synthase Dhc3 is responsible for biosynthesis up to the tetraketide stage. The non-reducing polyketide synthase Dhc5 then conducts four additional chain extension cycles, producing the unreduced part of the nascent octaketide from C-1 to C-8 in 10,11-dehydrocurvularin. This chain is Non-reducing polyketide synthase Dhc5, found in Alternaria cinerariae.